Reading from the N-terminus, the 622-residue chain is Modification methylase LlaI (622 aa).

It belongs to the N(4)/N(6)-methyltransferase family.

It catalyses the reaction a 2'-deoxyadenosine in DNA + S-adenosyl-L-methionine = an N(6)-methyl-2'-deoxyadenosine in DNA + S-adenosyl-L-homocysteine + H(+). Functionally, an alpha subtype methylase that modifies unknown specific adenine residues, and protects the DNA from cleavage by the LlaI endonuclease. In Lactococcus lactis subsp. lactis (Streptococcus lactis), this protein is Modification methylase LlaI.